We begin with the raw amino-acid sequence, 263 residues long: Ribonuclease 3 (263 aa).

A disordered region spans residues 1 to 23 (MPHSKNQRKHRHHSHSERRRQPK). The region spanning 35 to 164 (FDELLRTLNL…FVGALYLDQG (130 aa)) is the RNase III domain. Glu77 is a Mg(2+) binding site. Residue Asp81 is part of the active site. 2 residues coordinate Mg(2+): Asp150 and Glu153. Glu153 is a catalytic residue. One can recognise a DRBM domain in the interval 190–259 (DFKSQLQEFI…AQQALITLSQ (70 aa)).

The protein belongs to the ribonuclease III family. Homodimer. Mg(2+) serves as cofactor.

The protein resides in the cytoplasm. It carries out the reaction Endonucleolytic cleavage to 5'-phosphomonoester.. Its function is as follows. Digests double-stranded RNA. Involved in the processing of primary rRNA transcript to yield the immediate precursors to the large and small rRNAs (23S and 16S). Processes some mRNAs, and tRNAs when they are encoded in the rRNA operon. Processes pre-crRNA and tracrRNA of type II CRISPR loci if present in the organism. This is Ribonuclease 3 from Halalkalibacterium halodurans (strain ATCC BAA-125 / DSM 18197 / FERM 7344 / JCM 9153 / C-125) (Bacillus halodurans).